The primary structure comprises 313 residues: Malate dehydrogenase (313 aa).

NAD(+) contacts are provided by residues 11-16 (GAGSIG) and Asp35. Arg84 and Arg90 together coordinate substrate. NAD(+) is bound by residues Asn97 and 120–122 (VTN). Substrate-binding residues include Asn122 and Arg153. Residue His177 is the Proton acceptor of the active site.

It belongs to the LDH/MDH superfamily. MDH type 3 family.

The enzyme catalyses (S)-malate + NAD(+) = oxaloacetate + NADH + H(+). Catalyzes the reversible oxidation of malate to oxaloacetate. This chain is Malate dehydrogenase, found in Ehrlichia chaffeensis (strain ATCC CRL-10679 / Arkansas).